A 183-amino-acid polypeptide reads, in one-letter code: Acireductone dioxygenase (183 aa).

Positions 95, 97, 101, and 139 each coordinate Fe(2+). Positions 95, 97, 101, and 139 each coordinate Ni(2+).

Belongs to the acireductone dioxygenase (ARD) family. Monomer. Requires Fe(2+) as cofactor. Ni(2+) is required as a cofactor.

The catalysed reaction is 1,2-dihydroxy-5-(methylsulfanyl)pent-1-en-3-one + O2 = 3-(methylsulfanyl)propanoate + CO + formate + 2 H(+). It catalyses the reaction 1,2-dihydroxy-5-(methylsulfanyl)pent-1-en-3-one + O2 = 4-methylsulfanyl-2-oxobutanoate + formate + 2 H(+). It participates in amino-acid biosynthesis; L-methionine biosynthesis via salvage pathway; L-methionine from S-methyl-5-thio-alpha-D-ribose 1-phosphate: step 5/6. In terms of biological role, catalyzes 2 different reactions between oxygen and the acireductone 1,2-dihydroxy-3-keto-5-methylthiopentene (DHK-MTPene) depending upon the metal bound in the active site. Fe-containing acireductone dioxygenase (Fe-ARD) produces formate and 2-keto-4-methylthiobutyrate (KMTB), the alpha-ketoacid precursor of methionine in the methionine recycle pathway. Ni-containing acireductone dioxygenase (Ni-ARD) produces methylthiopropionate, carbon monoxide and formate, and does not lie on the methionine recycle pathway. In Hydrogenobaculum sp. (strain Y04AAS1), this protein is Acireductone dioxygenase.